The primary structure comprises 264 residues: Ion-translocating oxidoreductase complex subunit B (264 aa).

A helical transmembrane segment spans residues 5-25 (LINSIAVLAGLGFAVGVMLVI). Positions 33 to 92 (DSNPLIDDVASLLPGANCGGCGFAGCAACAEAIVEQGAPVNSCPVGGFEVAKQIGALLGQ) constitute a 4Fe-4S domain. The [4Fe-4S] cluster site is built by Cys-50, Cys-53, Cys-58, Cys-75, Cys-138, Cys-142, Cys-148, Cys-152, Cys-172, Cys-175, Cys-178, Cys-182, Cys-217, Cys-220, Cys-223, Cys-227, Cys-246, Cys-249, Cys-252, and Cys-256. 4Fe-4S ferredoxin-type domains lie at 127-162 (VALMLCDSRKGCTYGCLGLGTCVQACQFGALSMGED), 163-192 (GFPVVNKALCTSCGNCIAACPNGVLTFARD), 207-236 (KDVKAVCEVGCIGCKKCEKECPAGAIRVTE), and 237-264 (FLAEIDQEKCTACGACVAICPQKAIELR).

Belongs to the 4Fe4S bacterial-type ferredoxin family. RnfB subfamily. As to quaternary structure, the Rnf complex is probably composed of eight subunits, including RnfA, RnfB, RnfC, RnfD, RnfE and RnfG. The cofactor is [4Fe-4S] cluster.

The protein resides in the cell membrane. Functionally, part of a membrane-bound complex that couples electron transfer with translocation of ions across the membrane. Catalyzes Na(+) transport, most probably coupled to electron transfer from reduced ferredoxin to methanophenazine and heterodisulfide reductase. Involved in heterodisulfide reduction during methanogenesis from acetate. The sequence is that of Ion-translocating oxidoreductase complex subunit B from Methanosarcina acetivorans (strain ATCC 35395 / DSM 2834 / JCM 12185 / C2A).